Consider the following 52-residue polypeptide: Alpha-crystallin B chain (52 aa).

Belongs to the small heat shock protein (HSP20) family. Homodimer. Aggregates with homologous proteins, including alpha-A-crystallin and the small heat shock protein HSPB1, to form large heteromeric complexes.

Its function is as follows. May contribute to the transparency and refractive index of the lens. This chain is Alpha-crystallin B chain (CRYAB), found in Turdus merula (Common blackbird).